Here is a 349-residue protein sequence, read N- to C-terminus: Isopentenyl-diphosphate delta-isomerase (349 aa).

Substrate is bound at residue 6–7 (RK). FMN contacts are provided by residues 62 to 64 (AMT), Ser-93, and Asn-122. Gln-152 lines the substrate pocket. Residue Glu-153 participates in Mg(2+) binding. Residues Lys-184, Thr-214, 258 to 259 (GG), and 280 to 281 (AG) contribute to the FMN site.

Belongs to the IPP isomerase type 2 family. As to quaternary structure, homooctamer. Dimer of tetramers. Requires FMN as cofactor. The cofactor is NADPH. Mg(2+) serves as cofactor.

Its subcellular location is the cytoplasm. The enzyme catalyses isopentenyl diphosphate = dimethylallyl diphosphate. Functionally, involved in the biosynthesis of isoprenoids. Catalyzes the 1,3-allylic rearrangement of the homoallylic substrate isopentenyl (IPP) to its allylic isomer, dimethylallyl diphosphate (DMAPP). The polypeptide is Isopentenyl-diphosphate delta-isomerase (Bacillus cereus (strain 03BB102)).